A 314-amino-acid polypeptide reads, in one-letter code: L-lactate dehydrogenase 2 (314 aa).

NAD(+) is bound by residues valine 16, aspartate 37, lysine 42, tyrosine 68, and 82–83 (GL). Substrate is bound by residues glutamine 85, arginine 91, and 123–126 (NPVD). NAD(+)-binding positions include 121 to 123 (ATN) and serine 146. A substrate-binding site is contributed by 151–154 (DSAR). Positions 156 and 171 each coordinate beta-D-fructose 1,6-bisphosphate. Histidine 178 serves as the catalytic Proton acceptor. Tyrosine 223 bears the Phosphotyrosine mark. Residue threonine 232 coordinates substrate.

It belongs to the LDH/MDH superfamily. LDH family. As to quaternary structure, homotetramer.

It is found in the cytoplasm. The enzyme catalyses (S)-lactate + NAD(+) = pyruvate + NADH + H(+). Its pathway is fermentation; pyruvate fermentation to lactate; (S)-lactate from pyruvate: step 1/1. Its activity is regulated as follows. Allosterically activated by fructose 1,6-bisphosphate (FBP). Its function is as follows. Catalyzes the conversion of lactate to pyruvate. The protein is L-lactate dehydrogenase 2 of Bacillus cereus (strain ATCC 14579 / DSM 31 / CCUG 7414 / JCM 2152 / NBRC 15305 / NCIMB 9373 / NCTC 2599 / NRRL B-3711).